The following is a 618-amino-acid chain: Mitochondrial Rho GTPase 2 (618 aa).

The Cytoplasmic segment spans residues 1 to 592 (MRRDVRILLL…ELHPSSFWLR (592 aa)). A Miro 1 domain is found at 2-168 (RRDVRILLLG…FYYAQKAVLH (167 aa)). GTP contacts are provided by glycine 16, lysine 17, threonine 18, and serine 19. Threonine 18 is a Mg(2+) binding site. Mg(2+)-binding residues include proline 35 and aspartate 57. Position 59 (serine 59) interacts with GTP. Lysine 96 is covalently cross-linked (Glycyl lysine isopeptide (Lys-Gly) (interchain with G-Cter in ubiquitin)). Residues asparagine 118, lysine 119, aspartate 121, alanine 149, and lysine 150 each coordinate GTP. Lysine 119 participates in a covalent cross-link: Glycyl lysine isopeptide (Lys-Gly) (interchain with G-Cter in ubiquitin). A Glycyl lysine isopeptide (Lys-Gly) (interchain with G-Cter in ubiquitin) cross-link involves residue lysine 164. EF-hand domains follow at residues 184–219 (ACAQALTRIFRLSDQDLDQALSDEELNAFQKSCFGH) and 304–339 (LGYQFVQRVFEKHDQDRDGALSPVELQSLFSVFPAA). Ca(2+)-binding residues include aspartate 197, aspartate 199, aspartate 201, glutamate 208, aspartate 317, aspartate 319, aspartate 321, and glutamate 328. Positions 414–576 (RSVLLCKVVG…FTQLATMAAF (163 aa)) constitute a Miro 2 domain. Residues glycine 426, glycine 428, lysine 429, serine 430, and alanine 431 each contribute to the GTP site. GDP-binding residues include glycine 426, glycine 428, lysine 429, serine 430, and alanine 431. Serine 430 contributes to the Mg(2+) binding site. Glutamate 471 provides a ligand contact to Mg(2+). The GTP site is built by lysine 525, aspartate 527, and cysteine 556. Lysine 525, aspartate 527, and cysteine 556 together coordinate GDP. The chain crosses the membrane as a helical; Anchor for type IV membrane protein span at residues 593–615 (GLLGVVGAAVAAVLSFSLYRVLV). Over 616–618 (KSQ) the chain is Mitochondrial intermembrane.

This sequence belongs to the mitochondrial Rho GTPase family. In terms of assembly, homodimer. Interacts with the kinesin-binding proteins TRAK1/OIP106 and TRAK2/GRIF1, forming a link between mitochondria and the trafficking apparatus of the microtubules. Interacts with ARMCX3. Found in a complex with KIF5B, OGT, RHOT1 and TRAK1. Post-translationally, ubiquitinated by PRKN in a PINK1-dependent manner, leading to its degradation. As to expression, ubiquitously expressed. Highly expressed in heart, liver, skeletal muscle, kidney and pancreas.

Its subcellular location is the mitochondrion outer membrane. It catalyses the reaction GTP + H2O = GDP + phosphate + H(+). It carries out the reaction ATP + H2O = ADP + phosphate + H(+). The catalysed reaction is UTP + H2O = UDP + phosphate + H(+). Functionally, atypical mitochondrial nucleoside-triphosphatase (NTPase) involved in mitochondrial trafficking. Probably involved in control of anterograde transport of mitochondria and their subcellular distribution. Can hydrolyze GTP. Can hydrolyze ATP and UTP. The protein is Mitochondrial Rho GTPase 2 (RHOT2) of Homo sapiens (Human).